A 327-amino-acid polypeptide reads, in one-letter code: Biotin synthase (327 aa).

The region spanning Phe-49–Asp-273 is the Radical SAM core domain. Cys-67, Cys-71, and Cys-74 together coordinate [4Fe-4S] cluster. [2Fe-2S] cluster-binding residues include Ser-110, Cys-142, Cys-201, and Arg-277.

The protein belongs to the radical SAM superfamily. Biotin synthase family. As to quaternary structure, homodimer. [4Fe-4S] cluster serves as cofactor. Requires [2Fe-2S] cluster as cofactor.

The enzyme catalyses (4R,5S)-dethiobiotin + (sulfur carrier)-SH + 2 reduced [2Fe-2S]-[ferredoxin] + 2 S-adenosyl-L-methionine = (sulfur carrier)-H + biotin + 2 5'-deoxyadenosine + 2 L-methionine + 2 oxidized [2Fe-2S]-[ferredoxin]. It functions in the pathway cofactor biosynthesis; biotin biosynthesis; biotin from 7,8-diaminononanoate: step 2/2. Catalyzes the conversion of dethiobiotin (DTB) to biotin by the insertion of a sulfur atom into dethiobiotin via a radical-based mechanism. This chain is Biotin synthase, found in Methanococcus maripaludis (strain C6 / ATCC BAA-1332).